Reading from the N-terminus, the 362-residue chain is Formate dehydrogenase (362 aa).

Val93 and Asn119 together coordinate substrate. Residues 174–175 (RI), Asp195, 230–234 (PLHAG), Thr256, Asp282, 311–314 (HYSG), and Ser357 each bind NAD(+).

The protein belongs to the D-isomer specific 2-hydroxyacid dehydrogenase family. FDH subfamily. As to quaternary structure, homodimer.

It is found in the cytoplasm. The catalysed reaction is formate + NAD(+) = CO2 + NADH. In terms of biological role, catalyzes the NAD(+)-dependent oxidation of formate to carbon dioxide. Formate oxidation is the final step in the methanol oxidation pathway in methylotrophic microorganisms. Has a role in the detoxification of exogenous formate in non-methylotrophic organisms. The sequence is that of Formate dehydrogenase from Pichia angusta (Yeast).